The chain runs to 142 residues: Inner membrane protein YqaA (142 aa).

The Cytoplasmic segment spans residues 1–2 (MS). Residues 3–23 (EALSLFSLFASSFLSATLLPG) form a helical membrane-spanning segment. Over 24 to 26 (NSE) the chain is Periplasmic. Residues 27–47 (VVLVAMLLSGISHPWVLVLTA) traverse the membrane as a helical segment. Residues 48 to 86 (TMGNSLGGLTNVILGRFFPLRKTSRWQEKATGWLKRYGA) are Cytoplasmic-facing. The helical transmembrane segment at 87–107 (VTLLLSWMPVVGDLLCLLAGW) threads the bilayer. The Periplasmic segment spans residues 108 to 142 (MRISWGPVIFFLCLGKALRYVAVAAATVQGMMWWH).

The protein to H.influenzae HI_0489.

The protein resides in the cell inner membrane. This is Inner membrane protein YqaA (yqaA) from Escherichia coli (strain K12).